A 335-amino-acid polypeptide reads, in one-letter code: tRNA N6-adenosine threonylcarbamoyltransferase (335 aa).

Fe cation is bound by residues H111 and H115. Substrate-binding positions include 133-137, D166, G179, D183, and N268; that span reads IISGG. D296 is a Fe cation binding site.

The protein belongs to the KAE1 / TsaD family. Fe(2+) is required as a cofactor.

The protein localises to the cytoplasm. The enzyme catalyses L-threonylcarbamoyladenylate + adenosine(37) in tRNA = N(6)-L-threonylcarbamoyladenosine(37) in tRNA + AMP + H(+). In terms of biological role, required for the formation of a threonylcarbamoyl group on adenosine at position 37 (t(6)A37) in tRNAs that read codons beginning with adenine. Is involved in the transfer of the threonylcarbamoyl moiety of threonylcarbamoyl-AMP (TC-AMP) to the N6 group of A37, together with TsaE and TsaB. TsaD likely plays a direct catalytic role in this reaction. The sequence is that of tRNA N6-adenosine threonylcarbamoyltransferase from Aquifex aeolicus (strain VF5).